The sequence spans 131 residues: Predicted GPI-anchored protein 26 (131 aa).

Positions 1–18 (MHFSKIIAGSALSSVALA) are cleaved as a signal peptide. N-linked (GlcNAc...) asparagine glycosylation is found at N22 and N104. G110 carries GPI-anchor amidated glycine lipidation. A propeptide spans 111-131 (AGSKNVASALVGVVAIAAAMM) (removed in mature form).

The protein localises to the cell membrane. In terms of biological role, GPI-anchored protein involved in proper cell wall integrity. Does not seem to be directly involved in the synthesis of the cell wall. Required for normal virulence in a mouse model of disseminated candidiasis. This Candida albicans (strain SC5314 / ATCC MYA-2876) (Yeast) protein is Predicted GPI-anchored protein 26 (PGA26).